The primary structure comprises 779 residues: Protein WEAK CHLOROPLAST MOVEMENT UNDER BLUE LIGHT-like 1 (779 aa).

Positions 1–119 are disordered; sequence MEDLKTTDAL…NAVSPRPLYS (119 aa). Positions 79–88 are enriched in polar residues; that stretch reads DSPTTPSFVS. S139 is subject to Phosphoserine. 3 coiled-coil regions span residues 182-503, 532-587, and 657-715; these read RMKV…KQRE, KETR…ESRL, and AVSE…KWRE. Residues 650–661 show a composition bias toward low complexity; the sequence is ANARVAAAVSEV. 2 disordered regions span residues 650–674 and 694–759; these read ANAR…SLEK and EKAE…NPVK. 2 stretches are compositionally biased toward basic and acidic residues: residues 662–674 and 694–718; these read GEAK…SLEK and EKAE…EVSE. Polar residues predominate over residues 741–753; that stretch reads TSVSNETETNPIP.

Belongs to the WEB family.

The chain is Protein WEAK CHLOROPLAST MOVEMENT UNDER BLUE LIGHT-like 1 (WEL1) from Arabidopsis thaliana (Mouse-ear cress).